The primary structure comprises 441 residues: Eukaryotic translation initiation factor 3 subunit E (441 aa).

The PCI domain occupies 223-407; the sequence is IFFNHDNGRT…GTVIMEPTQP (185 aa).

The protein belongs to the eIF-3 subunit E family. Component of the eukaryotic translation initiation factor 3 (eIF-3) complex (Potential). Binds to the translation initiation factors TIF3F1 and TIF3H1. Associates with the CSN (COP9 signalosome) complex. Interacts directly with CSN1, CSN4, CSN6A, CSN6B, CSN7, CSN8 and TIF3C1. Binds to 40S small ribosomal subunit S9 (RPS9B and RPS9C) via its N-terminal part. Interacts with the 26S proteasome subunit RPN12a via its C-terminal part. Also binds with At1g27930 and At4g30620.

It is found in the cytoplasm. It localises to the nucleus. Functionally, component of the eukaryotic translation initiation factor 3 (eIF-3) complex, which is involved in protein synthesis of a specialized repertoire of mRNAs and, together with other initiation factors, stimulates binding of mRNA and methionyl-tRNAi to the 40S ribosome. The eIF-3 complex specifically targets and initiates translation of a subset of mRNAs involved in cell proliferation (Potential). Negatively regulates translation during flower development. The chain is Eukaryotic translation initiation factor 3 subunit E from Arabidopsis thaliana (Mouse-ear cress).